The following is a 355-amino-acid chain: MVQRLQSALVGTPEGGIRLSTTEIVPDITGDSVLVKTKAVSVNPVDTKMIGPYVTPGAVAGFDFAGVVEQVGPEATKCDIHVGDRVCTAIMGMNPLDPHVGAFSEYTAAVEWILLKIPPHLSFEEGASLGISFMTTGLALFKSLGLPGNPIEPATEPMPVLVYGGSSATGTAAVQLVKLAGFEPIATCSPRNFDLVKSYGASAVFDYQDPNCTSDIRKHTKNKIKYALDCISTTSSMQFCYQAIGRAGGKYTALEPYSEAVARTRKVVKPDWIMGPQMLGKEIRWPEPHWRPANAEMGEFGVYWTAVLRRLLDKGLIRPHHIVVKQGGLAEVLHGIEDIREKRISGKKLVFQMEI.

45–48 serves as a coordination point for NADP(+); that stretch reads VDTK. A substrate-binding site is contributed by 131–138; that stretch reads ISFMTTGL. NADP(+)-binding positions include 166 to 169, 189 to 192, tyrosine 207, and 254 to 255; these read SSAT, SPRN, and LE. Position 275–279 (275–279) interacts with substrate; it reads GPQML. 344-345 contacts NADP(+); sequence IS.

The protein belongs to the zinc-containing alcohol dehydrogenase family. In terms of assembly, monomer.

The catalysed reaction is L-serine + 7 malonyl-CoA + acetyl-CoA + 2 S-adenosyl-L-methionine + ATP + 8 NADPH + 11 H(+) = (5S)-3-[(2E,6R,8E,10E,12E)-2,6-dimethyltetradeca-2,8,10,12-tetraenoyl]-5-(hydroxymethyl)pyrrolidine-2,4-dione + AMP + 2 S-adenosyl-L-homocysteine + 7 CO2 + diphosphate + 8 NADP(+) + 8 CoA + 6 H2O. It functions in the pathway mycotoxin biosynthesis. Its function is as follows. Hybrid PKS-NRPS synthetase; part of the gene cluster that mediates the biosynthesis of trichosetin, a trans-fused decalin-containing tetramic acid with antimicrobial activity. The PKS module of PKS-NRPS1 together with the enoylreductase (ER) catalyze the formation of the polyketide unit which is then conjugated to L-serine by the condensation domain of the PKS-NRPS1 NRPS module. Activity of the Dieckmann cyclase domain (RED) results in release of the Dieckmann product intermediate. Diels-Alderase (DA) is involved in endo-selective Diels-Alder cycloaddition to form the decalin ring, leading to the production of N-desmethylequisetin also called trichosetin. The cluster does not contain the equisetin N-methyltransferase and consequently, trichosetin is isolated as final product. The polypeptide is Trans-enoyl reductase (Gibberella fujikuroi (strain CBS 195.34 / IMI 58289 / NRRL A-6831) (Bakanae and foot rot disease fungus)).